A 233-amino-acid chain; its full sequence is Large ribosomal subunit protein uL1 (233 aa).

It belongs to the universal ribosomal protein uL1 family. In terms of assembly, part of the 50S ribosomal subunit.

Functionally, binds directly to 23S rRNA. The L1 stalk is quite mobile in the ribosome, and is involved in E site tRNA release. Its function is as follows. Protein L1 is also a translational repressor protein, it controls the translation of the L11 operon by binding to its mRNA. The polypeptide is Large ribosomal subunit protein uL1 (Shewanella loihica (strain ATCC BAA-1088 / PV-4)).